Reading from the N-terminus, the 150-residue chain is Lipoprotein signal peptidase (150 aa).

A run of 3 helical transmembrane segments spans residues 5–25 (LSLV…NWVV), 59–79 (QQWF…WFLW), and 82–102 (MGQN…LGNF). Active-site residues include D113 and D129. Residues 124 to 144 (IFNIADILLSVGFVVLFIAIL) form a helical membrane-spanning segment.

This sequence belongs to the peptidase A8 family.

It is found in the cell membrane. It carries out the reaction Release of signal peptides from bacterial membrane prolipoproteins. Hydrolyzes -Xaa-Yaa-Zaa-|-(S,diacylglyceryl)Cys-, in which Xaa is hydrophobic (preferably Leu), and Yaa (Ala or Ser) and Zaa (Gly or Ala) have small, neutral side chains.. It functions in the pathway protein modification; lipoprotein biosynthesis (signal peptide cleavage). Functionally, this protein specifically catalyzes the removal of signal peptides from prolipoproteins. The polypeptide is Lipoprotein signal peptidase (Lactococcus lactis subsp. cremoris (strain SK11)).